The primary structure comprises 398 residues: Lymphocyte transmembrane adapter 1 (398 aa).

Residues 1–37 (MDGVTPTLSTIRGRTLESSTLHVTPRSLDRNKDQITN) lie on the Extracellular side of the membrane. The chain crosses the membrane as a helical; Signal-anchor for type III membrane protein span at residues 38-58 (IFSGFAGLLAILLVVAVFCIL). The Cytoplasmic segment spans residues 59–398 (WNWNKRKKRQ…GPGTQLLPDE (340 aa)). The residue at position 193 (Y193) is a Phosphotyrosine. The segment at 228 to 261 (TEERDEGCGDAGDCTSLYSPGAEDSDSLSNGEGS) is disordered. A phosphotyrosine mark is found at Y268 and Y294. The disordered stretch occupies residues 298-330 (PAADPSGSQQQAEKDVPSSNIGHVEDKTDDPGT). Residues 303 to 318 (SGSQQQAEKDVPSSNI) show a composition bias toward polar residues. The span at 320–329 (HVEDKTDDPG) shows a compositional bias: basic and acidic residues. 2 positions are modified to phosphotyrosine: Y345 and Y373. The segment at 347–398 (DFQPFTQSEDSQMKHREEMSNEDSSDYENVLTAKLGGRDSEQGPGTQLLPDE) is disordered.

As to quaternary structure, when phosphorylated, interacts with GRB2, PIK3R1 and GRAP2. In terms of processing, phosphorylated on tyrosines by Syk, Lck or ZAP70 upon TCR or BCR activation; which leads to the recruitment of GRB2, PIK3R1 and GRAP2. As to expression, expressed in spleen, thymus, and peripheral blood leukocytes. Expressed in several B-, T-, NK and monocyte cell lines.

It is found in the cell membrane. Functionally, negatively regulates TCR (T-cell antigen receptor)-mediated signaling in T-cells and BCR (B-cell antigen receptor)-mediated signaling in B-cells. The sequence is that of Lymphocyte transmembrane adapter 1 (LAX1) from Homo sapiens (Human).